We begin with the raw amino-acid sequence, 260 residues long: NH(3)-dependent NAD(+) synthetase (260 aa).

31–38 is a binding site for ATP; that stretch reads GLSGGLDS. Aspartate 37 lines the Mg(2+) pocket. Arginine 112 serves as a coordination point for deamido-NAD(+). Position 132 (threonine 132) interacts with ATP. Glutamate 137 serves as a coordination point for Mg(2+). Residues lysine 161 and serine 183 each contribute to the ATP site.

Belongs to the NAD synthetase family. Homodimer.

It catalyses the reaction deamido-NAD(+) + NH4(+) + ATP = AMP + diphosphate + NAD(+) + H(+). The protein operates within cofactor biosynthesis; NAD(+) biosynthesis; NAD(+) from deamido-NAD(+) (ammonia route): step 1/1. Functionally, catalyzes the ATP-dependent amidation of deamido-NAD to form NAD. Uses ammonia as a nitrogen source. The chain is NH(3)-dependent NAD(+) synthetase from Helicobacter acinonychis (strain Sheeba).